A 270-amino-acid chain; its full sequence is Co-chaperone protein DjlA (270 aa).

Topologically, residues Met-1–Lys-6 are periplasmic. The helical transmembrane segment at Ile-7–His-31 threads the bilayer. Residues Met-32–Lys-270 lie on the Cytoplasmic side of the membrane. A J domain is found at Asp-204–Lys-270.

Homodimer.

The protein resides in the cell inner membrane. In terms of biological role, regulatory DnaK co-chaperone. Direct interaction between DnaK and DjlA is needed for the induction of the wcaABCDE operon, involved in the synthesis of a colanic acid polysaccharide capsule, possibly through activation of the RcsB/RcsC phosphotransfer signaling pathway. The colanic acid capsule may help the bacterium survive conditions outside the host. The protein is Co-chaperone protein DjlA of Salmonella paratyphi A (strain ATCC 9150 / SARB42).